A 185-amino-acid chain; its full sequence is Ribosome-recycling factor (185 aa).

It belongs to the RRF family.

The protein resides in the cytoplasm. Functionally, responsible for the release of ribosomes from messenger RNA at the termination of protein biosynthesis. May increase the efficiency of translation by recycling ribosomes from one round of translation to another. In Thioalkalivibrio sulfidiphilus (strain HL-EbGR7), this protein is Ribosome-recycling factor.